A 72-amino-acid polypeptide reads, in one-letter code: Beta-defensin 104A (72 aa).

An N-terminal signal peptide occupies residues 1–22 (MRRLVLLLAISLLLYQDLPVRS). 3 cysteine pairs are disulfide-bonded: Cys-30–Cys-57, Cys-37–Cys-51, and Cys-41–Cys-58.

It belongs to the beta-defensin family.

The protein resides in the secreted. Its function is as follows. Has antimicrobial activity. This chain is Beta-defensin 104A (DEFB104A), found in Pongo pygmaeus (Bornean orangutan).